A 193-amino-acid polypeptide reads, in one-letter code: Ion-translocating oxidoreductase complex subunit A (193 aa).

A run of 6 helical transmembrane segments spans residues 5-25 (LLLF…FLGL), 39-59 (IGMG…AWMV), 62-82 (FILL…LVIA), 102-122 (LLGI…VALL), 134-154 (AVYG…FAAI), and 171-191 (SIAL…TGLV).

This sequence belongs to the NqrDE/RnfAE family. The complex is composed of six subunits: RnfA, RnfB, RnfC, RnfD, RnfE and RnfG.

It localises to the cell inner membrane. Its function is as follows. Part of a membrane-bound complex that couples electron transfer with translocation of ions across the membrane. The chain is Ion-translocating oxidoreductase complex subunit A from Yersinia pestis bv. Antiqua (strain Nepal516).